The following is a 697-amino-acid chain: Elongation factor G (697 aa).

A tr-type G domain is found at 8-283 (ERCRNIGIMA…AVVDYLPSPL (276 aa)). GTP-binding positions include 17-24 (AHIDAGKT), 81-85 (DTPGH), and 135-138 (NKID).

This sequence belongs to the TRAFAC class translation factor GTPase superfamily. Classic translation factor GTPase family. EF-G/EF-2 subfamily.

It localises to the cytoplasm. Its function is as follows. Catalyzes the GTP-dependent ribosomal translocation step during translation elongation. During this step, the ribosome changes from the pre-translocational (PRE) to the post-translocational (POST) state as the newly formed A-site-bound peptidyl-tRNA and P-site-bound deacylated tRNA move to the P and E sites, respectively. Catalyzes the coordinated movement of the two tRNA molecules, the mRNA and conformational changes in the ribosome. This is Elongation factor G from Koribacter versatilis (strain Ellin345).